The primary structure comprises 763 residues: Ribonucleoside-diphosphate reductase subunit alpha (763 aa).

The 91-residue stretch at 5-95 (LFVTKRNGKK…IFHLRKKAYG (91 aa)) folds into the ATP-cone domain. Residues Lys9, 15–21 (EKINLDK), Thr55, and Lys91 each bind ATP. A GDP-binding site is contributed by Thr209. Cys225 and Cys462 form a disulfide bridge. DTTP is bound by residues 232–234 (DNL), Arg262, and Arg269. Position 437 (Asn437) interacts with GDP. The active-site Proton acceptor is Asn437. Cys439 (cysteine radical intermediate) is an active-site residue. GDP is bound by residues Glu441 and 623–625 (ETS). The Proton acceptor role is filled by Glu441.

It belongs to the ribonucleoside diphosphate reductase large chain family. Tetramer of two alpha and two beta subunits.

It carries out the reaction a 2'-deoxyribonucleoside 5'-diphosphate + [thioredoxin]-disulfide + H2O = a ribonucleoside 5'-diphosphate + [thioredoxin]-dithiol. Its activity is regulated as follows. Under complex allosteric control mediated by deoxynucleoside triphosphates and ATP binding to separate specificity and activation sites on the alpha subunit. The type of nucleotide bound at the specificity site determines substrate preference. It seems probable that ATP makes the enzyme reduce CDP and UDP, dGTP favors ADP reduction and dTTP favors GDP reduction. Stimulated by ATP and inhibited by dATP binding to the activity site. Functionally, provides the precursors necessary for DNA synthesis. Catalyzes the biosynthesis of deoxyribonucleotides from the corresponding ribonucleotides. The sequence is that of Ribonucleoside-diphosphate reductase subunit alpha (nrdA) from Buchnera aphidicola subsp. Schizaphis graminum (strain Sg).